The following is a 932-amino-acid chain: Protein translocase subunit SecA (932 aa).

Residues glutamine 87, 105–109 (GEGKT), and aspartate 515 contribute to the ATP site. Residues cysteine 916, cysteine 918, cysteine 927, and histidine 928 each contribute to the Zn(2+) site.

Belongs to the SecA family. In terms of assembly, monomer and homodimer. Part of the essential Sec protein translocation apparatus which comprises SecA, SecYEG and auxiliary proteins SecDF-YajC and YidC. Zn(2+) is required as a cofactor.

The protein resides in the cell inner membrane. It localises to the cytoplasm. It carries out the reaction ATP + H2O + cellular proteinSide 1 = ADP + phosphate + cellular proteinSide 2.. In terms of biological role, part of the Sec protein translocase complex. Interacts with the SecYEG preprotein conducting channel. Has a central role in coupling the hydrolysis of ATP to the transfer of proteins into and across the cell membrane, serving both as a receptor for the preprotein-SecB complex and as an ATP-driven molecular motor driving the stepwise translocation of polypeptide chains across the membrane. This Burkholderia multivorans (strain ATCC 17616 / 249) protein is Protein translocase subunit SecA.